Reading from the N-terminus, the 102-residue chain is Large ribosomal subunit protein bL21 (102 aa).

The protein belongs to the bacterial ribosomal protein bL21 family. Part of the 50S ribosomal subunit. Contacts protein L20.

Its function is as follows. This protein binds to 23S rRNA in the presence of protein L20. The chain is Large ribosomal subunit protein bL21 from Cutibacterium acnes (strain DSM 16379 / KPA171202) (Propionibacterium acnes).